We begin with the raw amino-acid sequence, 435 residues long: Prenyltransferase nanD (435 aa).

A substrate-binding site is contributed by Glu101. Positions 114, 202, and 204 each coordinate dimethylallyl diphosphate. Tyr206 contacts substrate. Dimethylallyl diphosphate is bound by residues Lys280, Tyr282, Tyr364, Tyr429, and Tyr433.

Belongs to the tryptophan dimethylallyltransferase family.

Its pathway is secondary metabolite biosynthesis. In terms of biological role, prenyltransferase; part of the gene cluster that mediates the biosynthesis of the benzazepine alkaloid nanangelenin A which contains an unprecedented 3,4-dihydro-1-benzazepine-2,5-dione-N-prenyl-N-acetoxy-anthranilamide scaffold. The first step of nanangelenin biosynthesis is catalyzed by the indoleamine 2,3-dioxygenase nanC which produces N-formyl-kynurenine through the catabolism of tryptophan. The two-module NRPS nanA then utilizes anthranilate (Ant) and L-kynurenine (L-Kyn) to assemble the dipeptide product nanangelenin B. The first adenylation domain of nanA (A1) loads anthranilate onto the T1 domain, while A2 loads kynurenine, generated through spontaneous nonenzymatic deformylation of the nanC-supplied N-formyl-kynurenine. The peptide bond formation between the tethered amino acids is catalyzed by the first condensation domain (C1) between anthranilate's carbonyl carbon and kynurenine's aliphatic primary amine. The second C domain (C2) catalyzes the final cyclization event between the aromatic amine of kynurenine and the tethered carbonyl carbon, yielding nanangelenin B. The terminal T3 domain enhances the catalytic efficiency of C2, suggesting the T2-tethered Ant-L-Kyn is transferred to T3 prior to cyclization by C2. Once released from nanA, nanangelenin B is then prenylated by the prenyltransferase nanD to form nanangelenin C. Nanangelenin C is then N-hydroxylated by the FAD-dependent monooxygenase nanF and further acetylated by the acetyltransferase nanB to yield nanangelenin F. Finally, the N-methyltransferase nanE methylates the amide nitrogen of 1-benzazepine to convert nanangelenin F into nanangelenin A. NanE is also able to methylate most of the intermediates of the pathway such as nanangelenin B and nanangelenin C to produce nanangelenin D and nanangelenin E, respectively. This is Prenyltransferase nanD from Aspergillus nanangensis.